The primary structure comprises 343 residues: Arginine-hydroxylase NDUFAF5, mitochondrial (343 aa).

The transit peptide at 1-29 directs the protein to the mitochondrion; it reads MLRRVVLSRLYARLGGPAVSAGRGGRRGV. Residues 18-40 are disordered; it reads AVSAGRGGRRGVASSVPPSGSTS.

This sequence belongs to the methyltransferase superfamily. As to quaternary structure, interacts with NDUFAF8, leading to stabilize NDUFAF5. Interacts with NDUFS7. Interacts with PYURF (via TRM112 domain); the interaction is direct and stabilizes NDUFAF5 protein.

The protein localises to the mitochondrion inner membrane. Functionally, arginine hydroxylase that mediates hydroxylation of 'Arg-111' of NDUFS7 and is involved in the assembly of mitochondrial NADH:ubiquinone oxidoreductase complex (complex I, MT-ND1) at early stages. May also have methyltransferase activity. This chain is Arginine-hydroxylase NDUFAF5, mitochondrial, found in Rattus norvegicus (Rat).